A 284-amino-acid polypeptide reads, in one-letter code: Undecaprenyl-diphosphatase (284 aa).

The next 8 helical transmembrane spans lie at 7 to 27 (IILG…TGHL), 44 to 64 (EMFD…LYFH), 90 to 110 (LWLK…PLND), 116 to 136 (FYHF…FIVI), 167 to 187 (VLSL…ALLI), 197 to 217 (FTFF…ILHF), 229 to 249 (FGVL…AIKF), and 259 to 279 (FTFF…YAAF).

The protein belongs to the UppP family.

The protein localises to the cell membrane. It carries out the reaction di-trans,octa-cis-undecaprenyl diphosphate + H2O = di-trans,octa-cis-undecaprenyl phosphate + phosphate + H(+). Functionally, catalyzes the dephosphorylation of undecaprenyl diphosphate (UPP). Confers resistance to bacitracin. The polypeptide is Undecaprenyl-diphosphatase (Lactococcus lactis subsp. cremoris (strain MG1363)).